A 500-amino-acid chain; its full sequence is NAD(P)H-quinone oxidoreductase chain 4, chloroplastic (500 aa).

14 helical membrane passes run 4–24 (FPWLTIIVVFPISAGLSIFFL), 37–57 (ICICLLELLLMTYVFCYHFQL), 87–107 (IGPILLTGFITTLATLAAWPV), 113–130 (LFHFLMLAMYSGQIGLFS), 134–154 (LLLFFLMWELELIPVYLLLSM), 167–187 (FILYTAGGSVFLLMGVLGMGL), 211–231 (ILFYFGFLIAYAVKLPIIPLH), 242–262 (HYSTCMLLAGILLKMGAYGLV), 272–292 (AHSIFSPWLVLAGTLQIIYAA), 305–325 (IAYSSVSHMGFTIIGIGSITD), 330–350 (GAILQLLSHGFLGAALFFLAG), 386–406 (LALPGMSGFVAEAVVFFGIIT), 416–436 (ILITFVMAIGMILTPIYLLSM), and 462–482 (LFVSICIFLPVIGIGIYPDFV).

Belongs to the complex I subunit 4 family.

The protein localises to the plastid. Its subcellular location is the chloroplast thylakoid membrane. It carries out the reaction a plastoquinone + NADH + (n+1) H(+)(in) = a plastoquinol + NAD(+) + n H(+)(out). It catalyses the reaction a plastoquinone + NADPH + (n+1) H(+)(in) = a plastoquinol + NADP(+) + n H(+)(out). This Acorus calamus var. americanus (American sweet flag) protein is NAD(P)H-quinone oxidoreductase chain 4, chloroplastic.